We begin with the raw amino-acid sequence, 874 residues long: Alanine--tRNA ligase (874 aa).

Residues His562, His566, Cys665, and His669 each contribute to the Zn(2+) site.

The protein belongs to the class-II aminoacyl-tRNA synthetase family. Zn(2+) is required as a cofactor.

Its subcellular location is the cytoplasm. It carries out the reaction tRNA(Ala) + L-alanine + ATP = L-alanyl-tRNA(Ala) + AMP + diphosphate. In terms of biological role, catalyzes the attachment of alanine to tRNA(Ala) in a two-step reaction: alanine is first activated by ATP to form Ala-AMP and then transferred to the acceptor end of tRNA(Ala). Also edits incorrectly charged Ser-tRNA(Ala) and Gly-tRNA(Ala) via its editing domain. The protein is Alanine--tRNA ligase of Pseudomonas savastanoi pv. phaseolicola (strain 1448A / Race 6) (Pseudomonas syringae pv. phaseolicola (strain 1448A / Race 6)).